The following is a 325-amino-acid chain: MSSAALVPADDILEPTLQSILDQKSLRWIFVGGKGGVGKTTTSCSLAIQLAKVRKSVLLISTDPAHNLSDAFGQKFGKEARLVDGFDNLSAMEIDPSASMQDLLAAGGEQGEDMGFGLGGMMQDLAFSIPGVDEAMSFAEVLKQVKSLSYEVIVFDTAPTGHTLRFLQFPTVLEKGLAKLSQLSNQFGPMLNSVLGARGGLPGGQNLDEVLSKMESLRETISEVNAQFKDADLTTFVCVCIAEFLSLYETERMIQELTSYQIDTHAIVVNQLLFPGKDSTCEQCKARRKMQKKYLDEIAELYEDFNVVRMPLLVEEVRGKEKLER.

34–41 (KGGVGKTT) contacts ATP. Aspartate 63 is an active-site residue. Residues glutamate 243 and asparagine 270 each coordinate ATP. Residues cysteine 281 and cysteine 284 each coordinate Zn(2+).

It belongs to the arsA ATPase family. As to quaternary structure, homodimer.

It is found in the cytoplasm. The protein localises to the endoplasmic reticulum. Its function is as follows. ATPase required for the post-translational delivery of tail-anchored (TA) proteins to the endoplasmic reticulum. Recognizes and selectively binds the transmembrane domain of TA proteins in the cytosol. This complex then targets to the endoplasmic reticulum by membrane-bound receptors, where the tail-anchored protein is released for insertion. This process is regulated by ATP binding and hydrolysis. ATP binding drives the homodimer towards the closed dimer state, facilitating recognition of newly synthesized TA membrane proteins. ATP hydrolysis is required for insertion. Subsequently, the homodimer reverts towards the open dimer state, lowering its affinity for the membrane-bound receptor, and returning it to the cytosol to initiate a new round of targeting. The polypeptide is ATPase GET3 (Coccidioides posadasii (strain C735) (Valley fever fungus)).